Reading from the N-terminus, the 319-residue chain is Acetyl-coenzyme A carboxylase carboxyl transferase subunit alpha (319 aa).

One can recognise a CoA carboxyltransferase C-terminal domain in the interval 38 to 292; sequence ALDKKAETLL…GKAIEMMLKE (255 aa).

This sequence belongs to the AccA family. Acetyl-CoA carboxylase is a heterohexamer composed of biotin carboxyl carrier protein (AccB), biotin carboxylase (AccC) and two subunits each of ACCase subunit alpha (AccA) and ACCase subunit beta (AccD).

It localises to the cytoplasm. It carries out the reaction N(6)-carboxybiotinyl-L-lysyl-[protein] + acetyl-CoA = N(6)-biotinyl-L-lysyl-[protein] + malonyl-CoA. It participates in lipid metabolism; malonyl-CoA biosynthesis; malonyl-CoA from acetyl-CoA: step 1/1. In terms of biological role, component of the acetyl coenzyme A carboxylase (ACC) complex. First, biotin carboxylase catalyzes the carboxylation of biotin on its carrier protein (BCCP) and then the CO(2) group is transferred by the carboxyltransferase to acetyl-CoA to form malonyl-CoA. In Cereibacter sphaeroides (strain ATCC 17029 / ATH 2.4.9) (Rhodobacter sphaeroides), this protein is Acetyl-coenzyme A carboxylase carboxyl transferase subunit alpha.